The chain runs to 473 residues: MVTFMVFGASGNLANKKTFPALFHLFKRNLVDRSSFYVLGYARSKIPIGEFRESIRESVKPDTESKQVFQDFIDRVSYFSGQYDQSSSYVEFRKHLESVEKKADSSKALRIFYIALPPSVYVTVSSHIYENLYLPGKSRLVIEKPFGKNYQSAVKLKEEVHKHWKEEEIYRIDHYTAKDMVNNFFTLRFANSSSIDAVLNRHSIQSVEIHMYETGGCEGRIGYYDANGVVRDVVQNHLTQIFCIAAMNEPKSASASDVRAEKVNLLKATRPASLKESMLGQYTTSEDGKIPGYLDLEGVPKDSKATTFAASTLHVDNDRWKGVPFVFVSGKRMKKGEVYIKYYFRLKDSGIFSDVKRRRYLILHVQPEEFVNLTCTINKPMTTDLQPIDAYASLNYNEQFKDLMKEKRDGYEILFEDAIRGDPTKFIRYDEVEYAWKIWDEILDSPKKPIPYPAGSDGPEGLEAYMKRHLGHE.

NADP(+) is bound by residues Arg43, Tyr121, and Lys144. D-glucose 6-phosphate is bound by residues Lys144, 174 to 178, Glu213, and Asp232; that span reads HYTAK. The active-site Proton acceptor is the His237. Residue Lys331 participates in D-glucose 6-phosphate binding. Lys341 contacts NADP(+). D-glucose 6-phosphate is bound at residue Gln366.

It belongs to the glucose-6-phosphate dehydrogenase family.

The protein localises to the cytoplasm. It carries out the reaction D-glucose 6-phosphate + NADP(+) = 6-phospho-D-glucono-1,5-lactone + NADPH + H(+). It functions in the pathway carbohydrate degradation; pentose phosphate pathway; D-ribulose 5-phosphate from D-glucose 6-phosphate (oxidative stage): step 1/3. Its function is as follows. Catalyzes the rate-limiting step of the oxidative pentose-phosphate pathway, which represents a route for the dissimilation of carbohydrates besides glycolysis. The main function of this enzyme is to provide reducing power (NADPH) and pentose phosphates for fatty acid and nucleic acid synthesis. The protein is Probable glucose-6-phosphate 1-dehydrogenase C7.13c of Schizosaccharomyces pombe (strain 972 / ATCC 24843) (Fission yeast).